Here is a 1334-residue protein sequence, read N- to C-terminus: MPLVRFEVRNEVGLGDPDLYGGGGGGGGGGGGGGVGAAAKKGGEAEPKALLEGVAVAGLVGILRQLGDLAEFAADVFHDLHEQVITTSARGRKVLTRVQNIEAALPSLEKAVKNQKSHIHFTYVPGSDWHAQLKDEQNHLLSSDLPRFMMDSYEECRDPPRLYLLDKFDNAGAGACSRRHSDPSYFKKAWDMMRADKTGNFQREKKSQKIKRKGSRLREPYHGQTTPRQRNGELQRALTAVQLTSRHFATPSTDGRSLSENRSTSDVRSNPDNISRSSSFSSKARLSFTEQVLDTKPTVVPHENGHDKLSNNNLHKLSNTPLHTRLNGTSADDLGDDLKQSSLLDDMTARSPSVKWDEKAEITMSTTSVYCDDVVMDKAEHVQSKCISPEQQEIDHREMETLEQQEALHQKAKQLLVSSGLNHHDEVPSETDNYVDALNTLESETETEPELQTKSRVKPVPSLNVDVPQVELIDNIVTESPDSSVAEFPDAYQNSSMPPAPESAADFPSLSSADAPDISEPVLSGYTANPHPEVSAIATNTPVSNTEDAPGPLEISESASRAYIITLPNQSLPDSKEIPDSKAEDAPIDSPEKLEPGPSSYTPTIPIKESSIVSQNTNAENVSGDCSEGTACAISYSQHIISDKPTNEVSATNSSPDDTSSDEDTVESGGIVEVSNSQPMPLNDSLENGCATQGLPANAPTNSTGVSSVKLWTNAGLFGLEPSKPPVFGAHDGPKEDTTPGHTQPQLCHSTGCPEVHFSKPTESAQVYVPNGNSPITSSFVGKLVGICPGSTSHSSETNQSTVRTPDTVIGQTEGSTGCSTSFEHSDHKNIIGKQTSISELLESEDSAENGAEMFSKTDMTGRNNMNQVSASSFSSIAQRFLANTLQRRTPKYTDLPMSSVIVNTDANGTDESTQISSLAPNETTFEASQFEKKTENDTNGLPKSSLFSSSHYSEKSSPPLEYMKISFHPMSAFEMSKLDLDFSDENLHENADDMMLPTFQLLPGSSVPQLGSGSESEDDTFGRSYSYSSYDDLSPRLYSNSELWDQEDANGLEDHDMHNNPNQIGSFGAPISSFVEFEQMDLSGAKSTVSLTDLGDDNGLGTLDSHPAGELPNFDTLMAHQNEAFIPHNPVSLSPDEGQLPPPPPLPPMQWRTMRQVASVEEGRGSAAKEDMLESTSDLPPVHTPVQEEHLLPIAPPDQQNLLPIAPPDQQGHAKENDRKVDGVKEISNPLDIEIRASLLQQIRDKSGQQKLNGHEKSKAVGNDTKNLDEREELLQQIRSKTFNLRRTNASKTNTSSPTTANSSVVAILEKANAIRQAVASDEGGDDDSWSDI.

A compositionally biased stretch (basic and acidic residues) spans 197 to 207; it reads KTGNFQREKKS. Disordered stretches follow at residues 197-281, 294-331, 481-516, 568-602, 643-668, 791-832, 931-956, 1000-1026, 1248-1268, and 1280-1304; these read KTGN…SSFS, DTKPTVVPHENGHDKLSNNNLHKLSNTPLHTRLNGTSA, PDSSVAEFPDAYQNSSMPPAPESAADFPSLSSADAP, PNQSLPDSKEIPDSKAEDAPIDSPEKLEPGPSSYT, DKPTNEVSATNSSPDDTSSDEDTVES, STSH…KNII, FEKKTENDTNGLPKSSLFSSSHYSEK, FQLLPGSSVPQLGSGSESEDDTFGRSY, SGQQKLNGHEKSKAVGNDTKN, and RSKTFNLRRTNASKTNTSSPTTANS. Positions 241 to 256 are enriched in polar residues; the sequence is VQLTSRHFATPSTDGR. A compositionally biased stretch (low complexity) spans 310–319; the sequence is SNNNLHKLSN. Residues 320 to 330 are compositionally biased toward polar residues; sequence TPLHTRLNGTS. Basic and acidic residues predominate over residues 574-595; sequence DSKEIPDSKAEDAPIDSPEKLE. Positions 791–823 are enriched in polar residues; it reads STSHSSETNQSTVRTPDTVIGQTEGSTGCSTSF. Residues 945-956 show a composition bias toward low complexity; the sequence is SSLFSSSHYSEK. A compositionally biased stretch (basic and acidic residues) spans 1248-1260; that stretch reads SGQQKLNGHEKSK. Residues 1271-1289 enclose the WH2 domain; sequence EREELLQQIRSKTFNLRRT. Over residues 1289-1304 the composition is skewed to low complexity; that stretch reads TNASKTNTSSPTTANS.

The protein belongs to the SCAR/WAVE family.

It localises to the cytoplasm. The protein resides in the cytoskeleton. Its function is as follows. Involved in regulation of actin and microtubule organization. Part of a WAVE complex that activates the Arp2/3 complex. The protein is SCAR-like protein 2 of Oryza sativa subsp. japonica (Rice).